We begin with the raw amino-acid sequence, 605 residues long: LysM domain receptor-like kinase 10 (605 aa).

An N-terminal signal peptide occupies residues 1 to 20 (MFSLPALLIGACAFAAAAVA). Residues 21–245 (ASGDGCRAGC…GMGNSLSGGA (225 aa)) are Extracellular-facing. Disulfide bonds link C26-C89, C30-C161, and C87-C159. An N-linked (GlcNAc...) asparagine glycan is attached at N44. Chitin-binding positions include 115-121 (GGDTYDA) and 142-148 (PPGRIPG). N-linked (GlcNAc...) asparagine glycans are attached at residues N154 and N158. The LysM domain maps to 174–221 (LTYPLWDGETLESVAAQYGFSSPAEMELIRRYNPGMGGVSGKGIVFIP). N-linked (GlcNAc...) asparagine glycosylation is present at N226. The helical transmembrane segment at 246–266 (IAGIVIACIAIFIVAIWLIIM) threads the bilayer. The Cytoplasmic portion of the chain corresponds to 267 to 605 (FYRWQKFRKA…DLRDMDYHPF (339 aa)). S278 is modified (phosphoserine). Residues 317-591 (FSMEHKIGQG…RSVVVALMAL (275 aa)) enclose the Protein kinase domain. ATP contacts are provided by residues 323–331 (IGQGGFGSV) and K344. D436 acts as the Proton acceptor in catalysis.

Belongs to the protein kinase superfamily. Ser/Thr protein kinase family.

The protein resides in the cell membrane. It carries out the reaction L-seryl-[protein] + ATP = O-phospho-L-seryl-[protein] + ADP + H(+). The catalysed reaction is L-threonyl-[protein] + ATP = O-phospho-L-threonyl-[protein] + ADP + H(+). This Oryza sativa subsp. japonica (Rice) protein is LysM domain receptor-like kinase 10.